We begin with the raw amino-acid sequence, 340 residues long: tRNA-dihydrouridine(20/20a) synthase (340 aa).

Residues proline 22–methionine 24 and glutamine 75 each bind FMN. Cysteine 105 (proton donor) is an active-site residue. FMN-binding positions include lysine 144, histidine 177, asparagine 217–glycine 219, and glycine 239–arginine 240.

The protein belongs to the Dus family. DusA subfamily. FMN is required as a cofactor.

It carries out the reaction 5,6-dihydrouridine(20) in tRNA + NADP(+) = uridine(20) in tRNA + NADPH + H(+). The enzyme catalyses 5,6-dihydrouridine(20) in tRNA + NAD(+) = uridine(20) in tRNA + NADH + H(+). The catalysed reaction is 5,6-dihydrouridine(20a) in tRNA + NADP(+) = uridine(20a) in tRNA + NADPH + H(+). It catalyses the reaction 5,6-dihydrouridine(20a) in tRNA + NAD(+) = uridine(20a) in tRNA + NADH + H(+). In terms of biological role, catalyzes the synthesis of 5,6-dihydrouridine (D), a modified base found in the D-loop of most tRNAs, via the reduction of the C5-C6 double bond in target uridines. Specifically modifies U20 and U20a in tRNAs. This Xylella fastidiosa (strain 9a5c) protein is tRNA-dihydrouridine(20/20a) synthase.